The sequence spans 349 residues: Transcription elongation factor A protein 3 (349 aa).

Residues 5 to 82 enclose the TFIIS N-terminal domain; sequence EELLRIAKKL…RNWKQLLDSP (78 aa). The interval 80-170 is disordered; that stretch reads DSPATPKGEK…RTPSSPSSPT (91 aa). The span at 101–110 shows a compositional bias: basic and acidic residues; sequence KGLDCSDWKP. A Phosphoserine modification is found at Ser115. The span at 121–133 shows a compositional bias: basic and acidic residues; that stretch reads RVEEPKDRRDSVD. 2 stretches are compositionally biased toward low complexity: residues 134–144 and 160–170; these read SKSSATSSPKR and PRTPSSPSSPT. Phosphoserine is present on Ser141. In terms of domain architecture, TFIIS central spans 188-304; it reads VRDKCVEMLS…EHQMAKTGGT (117 aa). The TFIIS-type zinc finger occupies 307 to 347; the sequence is DLFQCSKCKKKNCTYNQVQTRSADEPMTTFVLCNECGNRWK. Zn(2+) is bound by residues Cys311, Cys314, Cys339, and Cys342.

This sequence belongs to the TFS-II family.

It is found in the nucleus. Necessary for efficient RNA polymerase II transcription elongation past template-encoded arresting sites. The arresting sites in DNA have the property of trapping a certain fraction of elongating RNA polymerases that pass through, resulting in locked ternary complexes. Cleavage of the nascent transcript by S-II allows the resumption of elongation from the new 3'-terminus. The protein is Transcription elongation factor A protein 3 (TCEA3) of Bos taurus (Bovine).